The following is a 92-amino-acid chain: Acylphosphatase (92 aa).

Positions 5–90 (TWRLVAHGRV…GEFAGFEFRP (86 aa)) constitute an Acylphosphatase-like domain. Catalysis depends on residues Arg20 and Asn38.

This sequence belongs to the acylphosphatase family.

The enzyme catalyses an acyl phosphate + H2O = a carboxylate + phosphate + H(+). In Cupriavidus necator (strain ATCC 17699 / DSM 428 / KCTC 22496 / NCIMB 10442 / H16 / Stanier 337) (Ralstonia eutropha), this protein is Acylphosphatase (acyP).